The following is a 239-amino-acid chain: 1-(5-phosphoribosyl)-5-[(5-phosphoribosylamino)methylideneamino] imidazole-4-carboxamide isomerase (239 aa).

The active-site Proton acceptor is the aspartate 8. The active-site Proton donor is aspartate 129.

The protein belongs to the HisA/HisF family.

It is found in the cytoplasm. The catalysed reaction is 1-(5-phospho-beta-D-ribosyl)-5-[(5-phospho-beta-D-ribosylamino)methylideneamino]imidazole-4-carboxamide = 5-[(5-phospho-1-deoxy-D-ribulos-1-ylimino)methylamino]-1-(5-phospho-beta-D-ribosyl)imidazole-4-carboxamide. It functions in the pathway amino-acid biosynthesis; L-histidine biosynthesis; L-histidine from 5-phospho-alpha-D-ribose 1-diphosphate: step 4/9. In Bacillus cereus (strain ATCC 10987 / NRS 248), this protein is 1-(5-phosphoribosyl)-5-[(5-phosphoribosylamino)methylideneamino] imidazole-4-carboxamide isomerase.